A 103-amino-acid polypeptide reads, in one-letter code: Co-chaperonin GroES (103 aa).

This sequence belongs to the GroES chaperonin family. Heptamer of 7 subunits arranged in a ring. Interacts with the chaperonin GroEL.

It is found in the cytoplasm. Together with the chaperonin GroEL, plays an essential role in assisting protein folding. The GroEL-GroES system forms a nano-cage that allows encapsulation of the non-native substrate proteins and provides a physical environment optimized to promote and accelerate protein folding. GroES binds to the apical surface of the GroEL ring, thereby capping the opening of the GroEL channel. In Picosynechococcus sp. (strain ATCC 27264 / PCC 7002 / PR-6) (Agmenellum quadruplicatum), this protein is Co-chaperonin GroES.